Consider the following 473-residue polypeptide: Cannabinoid receptor 1 (473 aa).

The Extracellular segment spans residues 1-118 (MKSILDGLAD…CFMILNPSQQ (118 aa)). Residues 2-23 (KSILDGLADTTFRTITTDLLYV) form a required for mitochondrial localization region. Residues N79 and N85 are each glycosylated (N-linked (GlcNAc...) asparagine). Residues 119-144 (LAIAVLSLTLGTFTVLENLLVLCVIL) form a helical membrane-spanning segment. Residues 145–156 (HSRSLRCRPSYH) lie on the Cytoplasmic side of the membrane. A helical transmembrane segment spans residues 157–177 (FIGSLAVADLLGSVIFVYSFV). Topologically, residues 178–189 (DFHVFHRKDSPN) are extracellular. The chain crosses the membrane as a helical span at residues 190 to 214 (VFLFKLGGVTASFTASVGSLFLTAI). The Cytoplasmic portion of the chain corresponds to 215 to 234 (DRYISIHRPLAYKRIVTRPK). A helical membrane pass occupies residues 235 to 257 (AVVAFCVMWTIAIVIAVLPLLGW). The Extracellular portion of the chain corresponds to 258 to 275 (NCKKLNSVCSDIFPLIDE). Residues 276–301 (TYLMFWIGVTSILLLFIVYAYMYILW) form a helical membrane-spanning segment. Topologically, residues 302-346 (KAHSHAVRMLQRGTQKSIIIQSTEDGKVQITRPDQTRMDIRLAKT) are cytoplasmic. Residues 347 to 367 (LVLILVVLIICWGPLLAIMVY) traverse the membrane as a helical segment. At 368–379 (DVFGKMNKLIKT) the chain is on the extracellular side. The helical transmembrane segment at 380–401 (IFAFCSMLCLLNSTVNPIIYAL) threads the bilayer. The Cytoplasmic segment spans residues 402 to 473 (RSKDLRHAFR…VSTDTTAEAL (72 aa)). C417 carries the S-palmitoyl cysteine lipid modification.

It belongs to the G-protein coupled receptor 1 family. Palmitoylation at Cys-417 is important for recruitment at both plasma membrane and lipid rafts and association with G protein alpha subunits.

It localises to the cell membrane. Its subcellular location is the mitochondrion outer membrane. It is found in the cell projection. The protein localises to the axon. The protein resides in the presynapse. Functionally, G-protein coupled receptor for cannabinoids. Mediates many cannabinoid-induced effects in the central nervous system (CNS), as well as in peripheral tissues. Regulates cellular respiration and energy production in response to cannabinoids. Signaling typically involves reduction in cyclic AMP. This Taeniopygia guttata (Zebra finch) protein is Cannabinoid receptor 1 (CNR1).